The sequence spans 259 residues: uncharacterized protein (259 aa).

The protein belongs to the ParA family.

This is an uncharacterized protein from Methanocaldococcus jannaschii (strain ATCC 43067 / DSM 2661 / JAL-1 / JCM 10045 / NBRC 100440) (Methanococcus jannaschii).